The primary structure comprises 602 residues: Leucine-rich repeat-containing protein 40 (602 aa).

S71 carries the phosphoserine modification. LRR repeat units follow at residues 83-104, 106-127, 129-150, 152-173, 175-196, 198-219, 221-242, 244-265, 266-286, 290-311, 313-335, 336-356, 400-421, 426-447, 450-472, 473-494, 496-517, 519-540, 543-564, and 566-586; these read DLTK…LRLL, ALTV…IREL, NLQK…ITNL, NLKC…FEQL, NLED…FSSL, SLVR…INRM, RLKH…LAGM, SLEL…PSCS, LLKE…EHLK, SILV…IILL, SLER…GNLH, LKFL…IISK, TLKI…VFDA, IVTS…MVEL, MVSD…CVLQ, KLTF…MESL, RLQT…LYRI, TLET…KMKM, NLTT…LGNC, and NLRT…AILM.

The polypeptide is Leucine-rich repeat-containing protein 40 (LRRC40) (Homo sapiens (Human)).